Reading from the N-terminus, the 200-residue chain is Proteasome subunit beta 2 (200 aa).

The propeptide at M1–G10 is removed in mature form; by autocatalysis. T11 acts as the Nucleophile in catalysis.

Belongs to the peptidase T1B family. In terms of assembly, the 20S proteasome core is composed of 14 alpha and 14 beta subunits that assemble into four stacked heptameric rings, resulting in a barrel-shaped structure. The two inner rings, each composed of seven catalytic beta subunits, are sandwiched by two outer rings, each composed of seven alpha subunits. The catalytic chamber with the active sites is on the inside of the barrel. Has a gated structure, the ends of the cylinder being occluded by the N-termini of the alpha-subunits. Is capped at one or both ends by the proteasome regulatory ATPase, PAN.

The protein localises to the cytoplasm. The catalysed reaction is Cleavage of peptide bonds with very broad specificity.. With respect to regulation, the formation of the proteasomal ATPase PAN-20S proteasome complex, via the docking of the C-termini of PAN into the intersubunit pockets in the alpha-rings, triggers opening of the gate for substrate entry. Interconversion between the open-gate and close-gate conformations leads to a dynamic regulation of the 20S proteasome proteolysis activity. In terms of biological role, component of the proteasome core, a large protease complex with broad specificity involved in protein degradation. The polypeptide is Proteasome subunit beta 2 (Caldivirga maquilingensis (strain ATCC 700844 / DSM 13496 / JCM 10307 / IC-167)).